The chain runs to 67 residues: Putative sodium channel alpha-toxin Acra7 (67 aa).

Positions 2–66 constitute an LCN-type CS-alpha/beta domain; the sequence is RDGYIVKPTN…PIKDPNQDCT (65 aa). Intrachain disulfides connect cysteine 12–cysteine 65, cysteine 16–cysteine 37, cysteine 23–cysteine 47, and cysteine 27–cysteine 49. Position 67 (arginine 67) is a propeptide, removed by a carboxypeptidase.

It belongs to the long (4 C-C) scorpion toxin superfamily. Sodium channel inhibitor family. Alpha subfamily. Expressed by the venom gland.

It is found in the secreted. In terms of biological role, alpha toxins bind voltage-independently at site-3 of sodium channels (Nav) and inhibit the inactivation of the activated channels, thereby blocking neuronal transmission. This chain is Putative sodium channel alpha-toxin Acra7, found in Androctonus crassicauda (Arabian fat-tailed scorpion).